Reading from the N-terminus, the 334-residue chain is Phosphoribosylformylglycinamidine cyclo-ligase (334 aa).

This sequence belongs to the AIR synthase family.

The protein localises to the cytoplasm. The catalysed reaction is 2-formamido-N(1)-(5-O-phospho-beta-D-ribosyl)acetamidine + ATP = 5-amino-1-(5-phospho-beta-D-ribosyl)imidazole + ADP + phosphate + H(+). It participates in purine metabolism; IMP biosynthesis via de novo pathway; 5-amino-1-(5-phospho-D-ribosyl)imidazole from N(2)-formyl-N(1)-(5-phospho-D-ribosyl)glycinamide: step 2/2. This Pyrococcus abyssi (strain GE5 / Orsay) protein is Phosphoribosylformylglycinamidine cyclo-ligase.